A 444-amino-acid chain; its full sequence is Glutamate--tRNA ligase 1 (444 aa).

The 'HIGH' region signature appears at 7–17 (PSPTGYLHVGN). A 'KMSKS' region motif is present at residues 238 to 242 (KISKR). K241 provides a ligand contact to ATP.

The protein belongs to the class-I aminoacyl-tRNA synthetase family. Glutamate--tRNA ligase type 1 subfamily. Monomer.

Its subcellular location is the cytoplasm. It carries out the reaction tRNA(Glu) + L-glutamate + ATP = L-glutamyl-tRNA(Glu) + AMP + diphosphate. In terms of biological role, catalyzes the attachment of glutamate to tRNA(Glu) in a two-step reaction: glutamate is first activated by ATP to form Glu-AMP and then transferred to the acceptor end of tRNA(Glu). This is Glutamate--tRNA ligase 1 from Wolbachia pipientis subsp. Culex pipiens (strain wPip).